Consider the following 526-residue polypeptide: Peptide chain release factor 3 (526 aa).

Residues 8-277 enclose the tr-type G domain; that stretch reads NKRRTFAIIS…GLTEWAPKPQ (270 aa). GTP is bound by residues 17–24, 85–89, and 139–142; these read SHPDAGKT, DTPGH, and NKLD.

It belongs to the TRAFAC class translation factor GTPase superfamily. Classic translation factor GTPase family. PrfC subfamily.

The protein localises to the cytoplasm. Functionally, increases the formation of ribosomal termination complexes and stimulates activities of RF-1 and RF-2. It binds guanine nucleotides and has strong preference for UGA stop codons. It may interact directly with the ribosome. The stimulation of RF-1 and RF-2 is significantly reduced by GTP and GDP, but not by GMP. This is Peptide chain release factor 3 from Actinobacillus pleuropneumoniae serotype 7 (strain AP76).